The primary structure comprises 250 residues: Leucyl/phenylalanyl-tRNA--protein transferase (250 aa).

Belongs to the L/F-transferase family.

The protein resides in the cytoplasm. The catalysed reaction is N-terminal L-lysyl-[protein] + L-leucyl-tRNA(Leu) = N-terminal L-leucyl-L-lysyl-[protein] + tRNA(Leu) + H(+). It catalyses the reaction N-terminal L-arginyl-[protein] + L-leucyl-tRNA(Leu) = N-terminal L-leucyl-L-arginyl-[protein] + tRNA(Leu) + H(+). It carries out the reaction L-phenylalanyl-tRNA(Phe) + an N-terminal L-alpha-aminoacyl-[protein] = an N-terminal L-phenylalanyl-L-alpha-aminoacyl-[protein] + tRNA(Phe). Its function is as follows. Functions in the N-end rule pathway of protein degradation where it conjugates Leu, Phe and, less efficiently, Met from aminoacyl-tRNAs to the N-termini of proteins containing an N-terminal arginine or lysine. This Cupriavidus taiwanensis (strain DSM 17343 / BCRC 17206 / CCUG 44338 / CIP 107171 / LMG 19424 / R1) (Ralstonia taiwanensis (strain LMG 19424)) protein is Leucyl/phenylalanyl-tRNA--protein transferase.